A 393-amino-acid chain; its full sequence is S-adenosylmethionine synthase (393 aa).

Residue His16 coordinates ATP. Mg(2+) is bound at residue Asp18. Glu44 lines the K(+) pocket. Residues Glu57 and Gln100 each coordinate L-methionine. The segment at 100 to 110 (QSNDIAQGVDH) is flexible loop. ATP is bound by residues 167-169 (DAK), 238-239 (RF), Asp247, 253-254 (RK), Ala270, and Lys274. Asp247 provides a ligand contact to L-methionine. Lys278 contacts L-methionine.

It belongs to the AdoMet synthase family. In terms of assembly, homotetramer; dimer of dimers. Mg(2+) serves as cofactor. K(+) is required as a cofactor.

Its subcellular location is the cytoplasm. It catalyses the reaction L-methionine + ATP + H2O = S-adenosyl-L-methionine + phosphate + diphosphate. It participates in amino-acid biosynthesis; S-adenosyl-L-methionine biosynthesis; S-adenosyl-L-methionine from L-methionine: step 1/1. Its function is as follows. Catalyzes the formation of S-adenosylmethionine (AdoMet) from methionine and ATP. The overall synthetic reaction is composed of two sequential steps, AdoMet formation and the subsequent tripolyphosphate hydrolysis which occurs prior to release of AdoMet from the enzyme. The polypeptide is S-adenosylmethionine synthase (Variovorax paradoxus (strain S110)).